Reading from the N-terminus, the 310-residue chain is Transcription initiation factor IIB (310 aa).

The TFIIB-type zinc finger occupies Glu9–Asp41. Zn(2+)-binding residues include Cys14, Cys17, Cys33, and Cys36. 2 repeat units span residues Ser127 to Leu210 and Asp221 to Glu302.

Belongs to the TFIIB family.

Functionally, stabilizes TBP binding to an archaeal box-A promoter. Also responsible for recruiting RNA polymerase II to the pre-initiation complex (DNA-TBP-TFIIB). This chain is Transcription initiation factor IIB, found in Methanothermobacter thermautotrophicus (strain ATCC 29096 / DSM 1053 / JCM 10044 / NBRC 100330 / Delta H) (Methanobacterium thermoautotrophicum).